We begin with the raw amino-acid sequence, 259 residues long: GDP-perosamine N-formyltransferase (259 aa).

Residues 89-91 (SLI) and 139-143 (DENFD) each bind (6S)-5,6,7,8-tetrahydrofolate.

This sequence belongs to the Fmt family. Homodimer.

It catalyses the reaction GDP-alpha-D-perosamine + (6R)-10-formyltetrahydrofolate = GDP-N-formyl-alpha-D-perosamine + (6S)-5,6,7,8-tetrahydrofolate + H(+). It functions in the pathway bacterial outer membrane biogenesis; lipopolysaccharide biosynthesis. Functionally, involved in the lipopolysaccharide (LPS) O-antigen biosynthesis. Catalyzes the transfer of a formyl group to GDP-perosamine, leading to the formation of GDP-N-formylperosamine. Is critical for full bacterial virulence. The protein is GDP-perosamine N-formyltransferase of Brucella abortus (strain 2308).